The sequence spans 701 residues: Elongation factor G (701 aa).

A tr-type G domain is found at 8-290; sequence KRYRNIGICA…AVIEFLPAPD (283 aa). GTP-binding positions include 17 to 24, 88 to 92, and 142 to 145; these read AHVDAGKT, DTPGH, and NKMD.

This sequence belongs to the TRAFAC class translation factor GTPase superfamily. Classic translation factor GTPase family. EF-G/EF-2 subfamily.

The protein localises to the cytoplasm. In terms of biological role, catalyzes the GTP-dependent ribosomal translocation step during translation elongation. During this step, the ribosome changes from the pre-translocational (PRE) to the post-translocational (POST) state as the newly formed A-site-bound peptidyl-tRNA and P-site-bound deacylated tRNA move to the P and E sites, respectively. Catalyzes the coordinated movement of the two tRNA molecules, the mRNA and conformational changes in the ribosome. This is Elongation factor G from Marinobacter nauticus (strain ATCC 700491 / DSM 11845 / VT8) (Marinobacter aquaeolei).